The chain runs to 530 residues: UDP-glucuronosyltransferase 1A9 (530 aa).

The N-terminal stretch at 1 to 25 (MACTGWTSPLPLCVCLLLTCGFAEA) is a signal peptide. The N-linked (GlcNAc...) asparagine glycan is linked to N71. Position 99 is an N6-succinyllysine (K99). N292 and N344 each carry an N-linked (GlcNAc...) asparagine glycan. Residues 488 to 504 (VIGFLLAVVLTVAFITF) form a helical membrane-spanning segment.

This sequence belongs to the UDP-glycosyltransferase family. In terms of assembly, homodimer. Homooligomer. Interacts with UGT1A1, UGT1A3, UGT1A4, UGT1A6, UGT1A7, UGT1A8 and UGT1A10 to form heterodimers. Isoform 1 interacts with isoform 2/i2 suggesting that oligomerization is involved in negative regulation of transferase activity by isoform 2. Isoform 1 also interacts with respective i2 isoforms of UGT1A1, UGT1A3, UGT1A4, UGT1A6, UGT1A7, UGT1A8 and UGT1A10. As to expression, expressed in liver, kidney, colon, esophagus and small intestine.

The protein resides in the endoplasmic reticulum membrane. It carries out the reaction glucuronate acceptor + UDP-alpha-D-glucuronate = acceptor beta-D-glucuronoside + UDP + H(+). It catalyses the reaction 2-hydroxy-17beta-estradiol + UDP-alpha-D-glucuronate = 2-hydroxy-17beta-estradiol 3-O-(beta-D-glucuronate) + UDP + H(+). The enzyme catalyses 4-hydroxy-17beta-estradiol + UDP-alpha-D-glucuronate = 17beta-estradiol 4-O-(beta-D-glucuronate) + UDP + H(+). The catalysed reaction is 2-hydroxyestrone + UDP-alpha-D-glucuronate = 2-hydroxyestrone 3-O-(beta-D-glucuronate) + UDP + H(+). It carries out the reaction 4-hydroxyestrone + UDP-alpha-D-glucuronate = estrone 4-O-(beta-D-glucuronate) + UDP + H(+). It catalyses the reaction prunetin + UDP-alpha-D-glucuronate = prunetin-5-O-beta-D-glucuronide + UDP. The enzyme catalyses 8-iso-prostaglandin F2alpha + UDP-alpha-D-glucuronate = 8-iso-prostaglandin F2alpha-glucuronide + UDP + H(+). The catalysed reaction is 5-epi-5-F2t-IsoP + UDP-alpha-D-glucuronate = 5-epi-5-F2t-IsoP-glucuronide + UDP + H(+). It carries out the reaction (5Z,8Z,11Z,14Z)-eicosatetraenoate + UDP-alpha-D-glucuronate = O-[(5Z),(8Z),(11Z),(14Z)-eicosatetraenoyl]-beta-D-glucuronate + UDP. It catalyses the reaction 15-hydroxy-(5Z,8Z,11Z,13E)-eicosatetraenoate + UDP-alpha-D-glucuronate = 15-O-(beta-D-glucuronosyl)-(5Z,8Z,11Z,14Z)-eicosatetraenoate + UDP + H(+). The enzyme catalyses prostaglandin B1 + UDP-alpha-D-glucuronate = 15-O-(beta-D-glucuronosyl)-prostaglandin B1 + UDP + H(+). The catalysed reaction is (E)-ferulate + UDP-alpha-D-glucuronate = (E)-4-O-(beta-D-glucuronosyl)-ferulate + UDP + H(+). It carries out the reaction (E)-ferulate + UDP-alpha-D-glucuronate = (E)-ferulic acid beta-D-glucuronate ester + UDP. It catalyses the reaction candesartan + UDP-alpha-D-glucuronate = candesartan O-beta-D-glucuronoside + UDP. The enzyme catalyses SN-38 + UDP-alpha-D-glucuronate = SN-38 O-beta-D-glucuronide + UDP + H(+). The catalysed reaction is mycophenolate + UDP-alpha-D-glucuronate = mycophenolate 7-O-beta-D-glucuronide + UDP + H(+). Functionally, UDP-glucuronosyltransferase (UGT) that catalyzes phase II biotransformation reactions in which lipophilic substrates are conjugated with glucuronic acid to increase the metabolite's water solubility, thereby facilitating excretion into either the urine or bile. Essential for the elimination and detoxification of drugs, xenobiotics and endogenous compounds. Catalyzes the glucuronidation of endogenous estrogen hormones such as estradiol and estrone. Involved in the glucuronidation of arachidonic acid (AA) and AA-derived eicosanoids including 15-HETE, PGB1 and F2-isoprostanes (8-iso-PGF2alpha and 5-epi-5-F2t-IsoP). Glucuronates the phytochemical ferulic acid efficently at both the phenolic or the carboxylic acid group. Also catalyzes the glucuronidation of the isoflavones genistein, daidzein, glycitein, formononetin, biochanin A and prunetin, which are phytoestrogens with anticancer and cardiovascular properties. Involved in the glucuronidation of the AGTR1 angiotensin receptor antagonist caderastan, a drug which can inhibit the effect of angiotensin II. Involved in the biotransformation of 7-ethyl-10-hydroxycamptothecin (SN-38), the pharmacologically active metabolite of the anticancer drug irinotecan. Also metabolizes mycophenolate, an immunosuppressive agent. Lacks UGT glucuronidation activity but acts as a negative regulator of isoform 1. This Homo sapiens (Human) protein is UDP-glucuronosyltransferase 1A9.